Here is a 529-residue protein sequence, read N- to C-terminus: Beta-galactoside alpha-2,6-sialyltransferase 2 (529 aa).

Topologically, residues 1–11 (MKPHLKQWRQR) are cytoplasmic. Residues 12 to 32 (MLFGIFAWGLLFLLIFIYFTD) traverse the membrane as a helical; Signal-anchor for type II membrane protein segment. The Lumenal segment spans residues 33–529 (SNPAEPVPSS…PAPSPVIPHS (497 aa)). O-linked (GalNAc...) serine glycosylation is present at Ser-69. Asn-211 carries an N-linked (GlcNAc...) asparagine glycan. Intrachain disulfides connect Cys-253/Cys-519, Cys-296/Cys-448, and Cys-466/Cys-477.

It belongs to the glycosyltransferase 29 family. In terms of processing, O-glycosylated. Weakly expressed in some tissues, such as small intestine, colon and fetal brain.

It is found in the golgi apparatus. It localises to the golgi stack membrane. The catalysed reaction is a beta-D-galactoside + CMP-N-acetyl-beta-neuraminate = an N-acetyl-alpha-neuraminyl-(2-&gt;6)-beta-D-galactosyl derivative + CMP + H(+). Its function is as follows. Transfers sialic acid from the donor of substrate CMP-sialic acid to galactose containing acceptor substrates. Has alpha-2,6-sialyltransferase activity toward oligosaccharides that have the Gal-beta-1,4-GlcNAc sequence at the non-reducing end of their carbohydrate groups, but it has weak or no activities toward glycoproteins and glycolipids. In Homo sapiens (Human), this protein is Beta-galactoside alpha-2,6-sialyltransferase 2 (ST6GAL2).